The following is a 45-amino-acid chain: Photosystem II reaction center protein K (45 aa).

Residues 1–8 (MEAALLLA) constitute a propeptide that is removed on maturation. Residues 24–44 (LPLIPLFFLLLAFVWQAAVGF) traverse the membrane as a helical segment.

This sequence belongs to the PsbK family. PSII is composed of 1 copy each of membrane proteins PsbA, PsbB, PsbC, PsbD, PsbE, PsbF, PsbH, PsbI, PsbJ, PsbK, PsbL, PsbM, PsbT, PsbX, PsbY, PsbZ, Psb30/Ycf12, peripheral proteins PsbO, CyanoQ (PsbQ), PsbU, PsbV and a large number of cofactors. It forms dimeric complexes.

The protein resides in the cellular thylakoid membrane. One of the components of the core complex of photosystem II (PSII). PSII is a light-driven water:plastoquinone oxidoreductase that uses light energy to abstract electrons from H(2)O, generating O(2) and a proton gradient subsequently used for ATP formation. It consists of a core antenna complex that captures photons, and an electron transfer chain that converts photonic excitation into a charge separation. In Picosynechococcus sp. (strain ATCC 27264 / PCC 7002 / PR-6) (Agmenellum quadruplicatum), this protein is Photosystem II reaction center protein K.